The sequence spans 549 residues: Glucose-6-phosphate isomerase (549 aa).

Glu355 functions as the Proton donor in the catalytic mechanism. Catalysis depends on residues His386 and Lys514.

The protein belongs to the GPI family.

It localises to the cytoplasm. It carries out the reaction alpha-D-glucose 6-phosphate = beta-D-fructose 6-phosphate. It participates in carbohydrate biosynthesis; gluconeogenesis. It functions in the pathway carbohydrate degradation; glycolysis; D-glyceraldehyde 3-phosphate and glycerone phosphate from D-glucose: step 2/4. Its function is as follows. Catalyzes the reversible isomerization of glucose-6-phosphate to fructose-6-phosphate. This chain is Glucose-6-phosphate isomerase, found in Salmonella schwarzengrund (strain CVM19633).